The primary structure comprises 65 residues: Conotoxin VnMLCL-041 (65 aa).

Positions 1-19 (MLCLPVFIILLLLASPAAP) are cleaved as a signal peptide. A propeptide spanning residues 20 to 43 (NPLQTRIQSNLIRAGPEDANIKTD) is cleaved from the precursor. Lys64 carries the post-translational modification Lysine amide.

This sequence belongs to the conotoxin T superfamily. Expressed by the venom duct.

The protein resides in the secreted. This Conus ventricosus (Mediterranean cone) protein is Conotoxin VnMLCL-041.